The primary structure comprises 450 residues: 23S rRNA (uracil(1939)-C(5))-methyltransferase RlmD (450 aa).

Residues 12-70 (SKQLSAKLSLNVDQLDHLGAGIAQYQGKVVFIPGALPDETVTVQLTEQKKNYARAKLIK) enclose the TRAM domain. 4 residues coordinate [4Fe-4S] cluster: Cys83, Cys89, Cys92, and Cys171. The S-adenosyl-L-methionine site is built by Gln283, Phe312, Asn317, Glu333, Asp360, and Asp380. Cys406 serves as the catalytic Nucleophile.

This sequence belongs to the class I-like SAM-binding methyltransferase superfamily. RNA M5U methyltransferase family. RlmD subfamily.

The enzyme catalyses uridine(1939) in 23S rRNA + S-adenosyl-L-methionine = 5-methyluridine(1939) in 23S rRNA + S-adenosyl-L-homocysteine + H(+). In terms of biological role, catalyzes the formation of 5-methyl-uridine at position 1939 (m5U1939) in 23S rRNA. In Shewanella putrefaciens (strain CN-32 / ATCC BAA-453), this protein is 23S rRNA (uracil(1939)-C(5))-methyltransferase RlmD.